A 166-amino-acid chain; its full sequence is Regulatory protein RecX (166 aa).

Belongs to the RecX family.

It is found in the cytoplasm. Functionally, modulates RecA activity. The polypeptide is Regulatory protein RecX (Salmonella paratyphi C (strain RKS4594)).